The chain runs to 215 residues: Protein LURP-one-related 16 (215 aa).

Gly2 carries N-myristoyl glycine lipidation.

The protein belongs to the LOR family.

Its function is as follows. Might be related to the phospholipid scramblase and tubby-like superfamily of membrane tethered transcription factors. The sequence is that of Protein LURP-one-related 16 from Arabidopsis thaliana (Mouse-ear cress).